Consider the following 355-residue polypeptide: METHIRYSRQDRTLILLDQRVLPTVEEDFYCNDVADTIYALQTMVVRGAPAIGVTAAYGCCLAAYEAGHPAPHAQWQKELDTLLEKLAQARPTAVNLRWAVERMRSVWKSMGDPDLNTLIARWLDEAEAIHEEDKSINRAIGRHGATLIQDNDCIMTHCNAGALATAGYGTALGVVRGAVDAGRTGITVIANETRPFLQGARLTAYELHKDGIPVTVACDNACGLLMQRGMVQKVVVGADRIAANGDAANKIGTYSVALLAREHGIPFYVAAPLSTIDRATPSGKQIPIEERPAEEVTHVGETRITPEGVPVYNYAFDVTPAHLIAGIVTEQGVLRPPYTASIARAFAAADKDRS.

Substrate is bound by residues 47–49 (RGA), arginine 91, and glutamine 199. Aspartate 240 acts as the Proton donor in catalysis. Residue 250–251 (NK) participates in substrate binding.

It belongs to the eIF-2B alpha/beta/delta subunits family. MtnA subfamily.

It catalyses the reaction 5-(methylsulfanyl)-alpha-D-ribose 1-phosphate = 5-(methylsulfanyl)-D-ribulose 1-phosphate. It functions in the pathway amino-acid biosynthesis; L-methionine biosynthesis via salvage pathway; L-methionine from S-methyl-5-thio-alpha-D-ribose 1-phosphate: step 1/6. Catalyzes the interconversion of methylthioribose-1-phosphate (MTR-1-P) into methylthioribulose-1-phosphate (MTRu-1-P). In Oleidesulfovibrio alaskensis (strain ATCC BAA-1058 / DSM 17464 / G20) (Desulfovibrio alaskensis), this protein is Methylthioribose-1-phosphate isomerase.